The following is a 175-amino-acid chain: Cytidylate kinase (175 aa).

Residue 7-15 (GQPGSGKTS) coordinates ATP.

It belongs to the cytidylate kinase family. Type 2 subfamily.

It is found in the cytoplasm. The enzyme catalyses CMP + ATP = CDP + ADP. It carries out the reaction dCMP + ATP = dCDP + ADP. In Methanocella arvoryzae (strain DSM 22066 / NBRC 105507 / MRE50), this protein is Cytidylate kinase.